Here is a 378-residue protein sequence, read N- to C-terminus: CST complex subunit STN1 (378 aa).

Residues 8-195 (MECESSPREE…KVYDQPFRNP (188 aa)) form an interaction with CTC1 region. The OB DNA-binding region spans 64–165 (VDIMGAVISV…EICANIYYKV (102 aa)). Winged helix-turn-helix (wHTH) regions lie at residues 201–305 (EALN…YVTT) and 306–378 (KDKD…YAAF).

Belongs to the STN1 family. In terms of assembly, component of the CST complex, composed of TEN1/C17orf106, CTC1/C17orf68 and STN1; in the complex interacts directly with TEN1 and CTC1. Interacts with ACD/TPP1. Interacts with POT1 and POLA1.

The protein localises to the nucleus. It localises to the chromosome. It is found in the telomere. Component of the CST complex proposed to act as a specialized replication factor promoting DNA replication under conditions of replication stress or natural replication barriers such as the telomere duplex. The CST complex binds single-stranded DNA with high affinity in a sequence-independent manner, while isolated subunits bind DNA with low affinity by themselves. Initially the CST complex has been proposed to protect telomeres from DNA degradation. However, the CST complex has been shown to be involved in several aspects of telomere replication. The CST complex inhibits telomerase and is involved in telomere length homeostasis; it is proposed to bind to newly telomerase-synthesized 3' overhangs and to terminate telomerase action implicating the association with the ACD:POT1 complex thus interfering with its telomerase stimulation activity. The CST complex is also proposed to be involved in fill-in synthesis of the telomeric C-strand probably implicating recruitment and activation of DNA polymerase alpha. The CST complex facilitates recovery from many forms of exogenous DNA damage; seems to be involved in the re-initiation of DNA replication at repaired forks and/or dormant origins. Required for efficicient replication of the duplex region of the telomere. Promotes efficient replication of lagging-strand telomeres. Promotes general replication start following replication-fork stalling implicating new origin firing. May be in involved in C-strand fill-in during late S/G2 phase independent of its role in telomere duplex replication. The sequence is that of CST complex subunit STN1 from Mus musculus (Mouse).